Here is a 431-residue protein sequence, read N- to C-terminus: STE20-related kinase adapter protein alpha (431 aa).

Ser2 and Ser46 each carry phosphoserine. In terms of domain architecture, Protein kinase spans 69–379 (YELLTVIGKG…ASTLLNHSFF (311 aa)). The segment at 310–347 (LTMSPSRSVANSGLSDSLTTSTPRPSNGDSPSHPYHRT) is disordered. The span at 312–339 (MSPSRSVANSGLSDSLTTSTPRPSNGDS) shows a compositional bias: polar residues. A phosphothreonine; by LKB1 mark is found at Thr329 and Thr419.

Belongs to the protein kinase superfamily. STE Ser/Thr protein kinase family. STE20 subfamily. As to quaternary structure, component of a trimeric complex composed of STK11/LKB1, STRAD (STRADA or STRADB) and CAB39/MO25 (CAB39/MO25alpha or CAB39L/MO25beta): the complex tethers STK11/LKB1 in the cytoplasm and stimulates its catalytic activity.

Its subcellular location is the nucleus. It localises to the cytoplasm. Functionally, pseudokinase which, in complex with CAB39/MO25 (CAB39/MO25alpha or CAB39L/MO25beta), binds to and activates STK11/LKB1. Adopts a closed conformation typical of active protein kinases and binds STK11/LKB1 as a pseudosubstrate, promoting conformational change of STK11/LKB1 in an active conformation. The chain is STE20-related kinase adapter protein alpha (STRADA) from Homo sapiens (Human).